We begin with the raw amino-acid sequence, 197 residues long: Endo-1,4-beta-xylanase A (197 aa).

The GH11 domain maps to 1–197 (SGTPSSTGTD…SSGTATITVT (197 aa)). Catalysis depends on glutamate 87, which acts as the Nucleophile. Cysteine 111 and cysteine 160 are disulfide-bonded. The Proton donor role is filled by glutamate 184.

It belongs to the glycosyl hydrolase 11 (cellulase G) family.

Its subcellular location is the secreted. The enzyme catalyses Endohydrolysis of (1-&gt;4)-beta-D-xylosidic linkages in xylans.. It functions in the pathway glycan degradation; xylan degradation. In terms of biological role, hydrolyzes xylans into xylobiose and xylose. This chain is Endo-1,4-beta-xylanase A (XYNA), found in Schizophyllum commune (Split gill fungus).